The sequence spans 395 residues: Acid ceramidase (395 aa).

The signal sequence occupies residues 1-21 (MPGRSCVALVLLAAAVSCAVA). Cysteine 31 and cysteine 340 are joined by a disulfide. The Nucleophile role is filled by cysteine 143. Residues asparagine 173, asparagine 195, asparagine 259, asparagine 286, asparagine 342, and asparagine 348 are each glycosylated (N-linked (GlcNAc...) asparagine). A disulfide bond links cysteine 388 and cysteine 392.

Belongs to the acid ceramidase family. As to quaternary structure, heterodimer; disulfide-linked. The heterodimer is composed of the disulfide-linked alpha and beta chains produced by autocatalytic cleavage of the precursor. Isoform 2: May interact with NR5A1 in the nucleus; the direct interaction would negatively regulate NR5A1 transcriptional activity. In terms of processing, N-glycosylated. Post-translationally, proteolytically cleaved into two chains alpha and beta that remain associated via a disulfide bond. Cleavage gives rise to a conformation change that activates the enzyme. The same catalytic Cys residue mediates the autoproteolytic cleavage and subsequent hydrolysis of lipid substrates. The beta chain may undergo an additional C-terminal processing. In terms of tissue distribution, broadly expressed with higher expression in heart.

Its subcellular location is the lysosome. It is found in the secreted. The protein localises to the nucleus. The protein resides in the cytoplasm. The enzyme catalyses an N-acylsphing-4-enine + H2O = sphing-4-enine + a fatty acid. It catalyses the reaction a beta-D-glucosyl-(1&lt;-&gt;1')-N-acylsphing-4-enine + H2O = beta-D-glucosyl-(1&lt;-&gt;1)-sphing-4-enine + a fatty acid. The catalysed reaction is a globoside Gb3Cer + H2O = a lysoGb3 + a fatty acid. It carries out the reaction a globoside Gb3Cer (d18:1(4E)) + H2O = a lysoGb3(d18:1(4E)) + a fatty acid. The enzyme catalyses N-dodecanoylsphing-4-enine + H2O = dodecanoate + sphing-4-enine. It catalyses the reaction N-tetradecanoylsphing-4-enine + H2O = tetradecanoate + sphing-4-enine. The catalysed reaction is N-hexadecanoylsphing-4-enine + H2O = sphing-4-enine + hexadecanoate. It carries out the reaction N-octadecanoylsphing-4-enine + H2O = sphing-4-enine + octadecanoate. The enzyme catalyses N-dodecanoyl-(4R)-hydroxysphinganine + H2O = (4R)-hydroxysphinganine + dodecanoate. It catalyses the reaction N-(dodecanoyl)-sphinganine + H2O = dodecanoate + sphinganine. The catalysed reaction is N-(acetyl)-sphing-4-enine + H2O = sphing-4-enine + acetate. It carries out the reaction N-(hexanoyl)sphing-4-enine + H2O = hexanoate + sphing-4-enine. The enzyme catalyses N-octanoylsphing-4-enine + H2O = octanoate + sphing-4-enine. It catalyses the reaction N-(9Z-octadecenoyl)-sphing-4-enine + H2O = sphing-4-enine + (9Z)-octadecenoate. The catalysed reaction is N-dodecanoylethanolamine + H2O = dodecanoate + ethanolamine. It participates in lipid metabolism; sphingolipid metabolism. Its activity is regulated as follows. Activated by Ca(2+), Mg(2+) and Na(+) cations. Inhibited by Zn(2+). Phosphatidylserine and phosphatidic acid stimulate while cardiolipin, phosphatidylcholine, lysophosphatidylcholine, phosphatidylethanolamine, phosphatidylinositol and sphingomyelin inhibit the reverse ceramide synthase activity. Phosphatidic acid, phosphatidylinositol and C16-ceramide inhibit the ceramidase/hydrolase activity. Lysosomal ceramidase that hydrolyzes sphingolipid ceramides into sphingosine and free fatty acids at acidic pH. Ceramides, sphingosine, and its phosphorylated form sphingosine-1-phosphate are bioactive lipids that mediate cellular signaling pathways regulating several biological processes including cell proliferation, apoptosis and differentiation. Has a higher catalytic efficiency towards C12-ceramides versus other ceramides. Also catalyzes the reverse reaction allowing the synthesis of ceramides from fatty acids and sphingosine. For the reverse synthetic reaction, the natural sphingosine D-erythro isomer is more efficiently utilized as a substrate compared to D-erythro-dihydrosphingosine and D-erythro-phytosphingosine, while the fatty acids with chain lengths of 12 or 14 carbons are the most efficiently used. Also has an N-acylethanolamine hydrolase activity. By regulating the levels of ceramides, sphingosine and sphingosine-1-phosphate in the epidermis, mediates the calcium-induced differentiation of epidermal keratinocytes. Also indirectly regulates tumor necrosis factor/TNF-induced apoptosis. By regulating the intracellular balance between ceramides and sphingosine, in adrenocortical cells, probably also acts as a regulator of steroidogenesis. Functionally, may directly regulate steroidogenesis by binding the nuclear receptor NR5A1 and negatively regulating its transcriptional activity. The chain is Acid ceramidase from Homo sapiens (Human).